The chain runs to 352 residues: MDDNKKKALAAALGQIERQFGKGAVMRMGDQDRQAIPAISTGSLGLDIALGIGGLPKGRIVEIYGPESSGKTTLTLSVIAQAQKAGATCAFVDAEHALDPEYAGKLGVNVDDLLVSQPDTGEQALEITDMLVRSNAVDVIIVDSVAALVPKAEIEGEMGDMHVGLQARLMSQALRKITGNIKNANCLVIFINQIRMKIGVMFGSPETTTGGNALKFYASVRLDIRRTGAVKEGDEVVGSETRVKVVKNKVASPFRQAEFQILYGKGIYLNGEMIDLGVLHGFVEKSGAWYAYEGTKIGQGKANSAKFLADNPEVAAKLEKQLRDKLLSPAVIADSKASAVKETEDDLADADI.

ATP is bound at residue 65 to 72; the sequence is GPESSGKT.

It belongs to the RecA family.

It is found in the cytoplasm. Its function is as follows. Can catalyze the hydrolysis of ATP in the presence of single-stranded DNA, the ATP-dependent uptake of single-stranded DNA by duplex DNA, and the ATP-dependent hybridization of homologous single-stranded DNAs. It interacts with LexA causing its activation and leading to its autocatalytic cleavage. The chain is Protein RecA from Pseudomonas fluorescens (strain Pf0-1).